We begin with the raw amino-acid sequence, 687 residues long: Chloride channel protein ClC-Ka (687 aa).

Transmembrane regions (helical) follow at residues 52 to 72, 94 to 114, 161 to 181, 204 to 224, and 236 to 256; these read FLVA…FAIG, LSWT…SQSI, IFLG…AYLG, AAAV…LFSI, and YWRG…LGVF. Ca(2+) is bound by residues E259, E261, D278, and E281. 6 consecutive transmembrane segments (helical) span residues 282 to 302, 325 to 345, 396 to 416, 417 to 437, 458 to 478, and 486 to 506; these read IFFF…YLFC, PSYA…PGVG, FTIF…LILA, TTIP…AAIG, VNPI…SGAV, and LLAF…MAVL. At 507–687 the chain is on the cytoplasmic side; that stretch reads AANAISQNCQ…STLINPPAPK (181 aa). 2 CBS domains span residues 551 to 609 and 626 to 687; these read MNCN…QPAS and CPTQ…PAPK.

Belongs to the chloride channel (TC 2.A.49) family. CLCNKA subfamily. Homodimer. Interacts with BSND. Expressed predominantly in the kidney. Expressed strongly in the cortical thick ascending limb and the distal convoluted tubule, with minor expression in the S3 segment of the proximal tubule and the cortical collecting tubule.

It localises to the basolateral cell membrane. It carries out the reaction chloride(in) = chloride(out). The enzyme catalyses bromide(in) = bromide(out). It catalyses the reaction nitrate(in) = nitrate(out). The catalysed reaction is iodide(out) = iodide(in). With respect to regulation, activated by extracellular Ca(2+) and inhibited by extracellular acidic pH. Its function is as follows. Anion-selective channel permeable to small monovalent anions with ion selectivity for chloride &gt; bromide &gt; nitrate &gt; iodide. Forms a homodimeric channel where each subunit has its own ion conduction pathway. Conducts double-barreled currents controlled by two types of gates, two fast gates that control each subunit independently and a slow common gate that opens and shuts off both subunits simultaneously. Assembles with the regulatory subunit BSND/Barttin for sorting at the basolateral plasma membrane domain. CLCNKA:BSND channels are activated upon membrane hyperpolarization mostly controlled by fast gating. Mediates transepithelial chloride transport from the lumen to interstitial compartment along the thin ascending limb of Henle's loop, contributing to generation of hypertonic medullary interstitium as a countercurrent system to achieve urine concentration. Conducts chloride currents in the stria vascularis of the inner ear to establish the endocochlear potential necessary for normal hearing. The polypeptide is Chloride channel protein ClC-Ka (Rattus norvegicus (Rat)).